Consider the following 63-residue polypeptide: Adipokinetic prohormone type 1 (63 aa).

The N-terminal stretch at 1-22 (MVQRCLVVALLVVVVAAALCSA) is a signal peptide. At Gln-23 the chain carries Pyrrolidone carboxylic acid. The residue at position 32 (Thr-32) is a Threonine amide.

The protein belongs to the AKH/HRTH/RPCH family. In terms of assembly, adipokinetic hormone precursor-related peptide (APRP) can form three type of disulfide-bond dimers: p1 (alpha-alpha), p2 (alpha-beta), and p3 (beta-beta).

The protein localises to the secreted. Its function is as follows. This hormone, released from cells in the corpora cardiaca, causes release of diglycerides from the fat body and stimulation of muscles to use these diglycerides as an energy source during energy-demanding processes. The sequence is that of Adipokinetic prohormone type 1 from Schistocerca gregaria (Desert locust).